A 639-amino-acid chain; its full sequence is Transcription factor phomR' (639 aa).

The segment at residues 14-41 (CWTCRLRRKKCNEGGPPCDNCEARGIHC) is a DNA-binding region (zn(2)-C6 fungal-type). 2 disordered regions span residues 58-136 (REEA…AGTG) and 476-499 (LPRS…TGPE). A compositionally biased stretch (low complexity) spans 68 to 108 (SGRGRSYSRSSSTAAAAAPKPAEGAMVTGGSSSSSRGSGSS).

The protein resides in the nucleus. Functionally, transcription factor; part of the gene cluster that mediates the biosynthesis of the phomopsins, a group of hexapeptide mycotoxins which infects lupins and causes lupinosis disease in livestock. May play a role in the regulation of the production of phomopsins. This chain is Transcription factor phomR', found in Diaporthe leptostromiformis (Lupinosis disease fungus).